The chain runs to 624 residues: LEAF RUST 10 DISEASE-RESISTANCE LOCUS RECEPTOR-LIKE PROTEIN KINASE-like 2.2 (624 aa).

The signal sequence occupies residues 1-30 (MDYLSSMGSQTARFCLILLFLFYYLPCALS). Residues 31–263 (QDDLWGCGTP…IPNTRSILIT (233 aa)) lie on the Extracellular side of the membrane. N-linked (GlcNAc...) asparagine glycosylation is found at Asn-45, Asn-75, Asn-85, Asn-95, Asn-150, and Asn-164. The chain crosses the membrane as a helical span at residues 264–284 (IGQVVGFHVFIIVVMIIAFLF). Residues 285 to 624 (WRRKKVNDLR…EEDSSIYSEV (340 aa)) are Cytoplasmic-facing. The 283-residue stretch at 317 to 599 (KSFTEVVGRG…SLDPPPKPLL (283 aa)) folds into the Protein kinase domain. ATP is bound by residues 323–331 (VGRGGFGTV) and Lys-345. The active-site Proton acceptor is Asp-434. Positions 587–624 (NLDSLDPPPKPLLHMPMQNNNAESSQPSEEDSSIYSEV) are disordered. Positions 603 to 624 (MQNNNAESSQPSEEDSSIYSEV) are enriched in polar residues.

This sequence belongs to the protein kinase superfamily. Ser/Thr protein kinase family.

The protein localises to the membrane. The catalysed reaction is L-seryl-[protein] + ATP = O-phospho-L-seryl-[protein] + ADP + H(+). It catalyses the reaction L-threonyl-[protein] + ATP = O-phospho-L-threonyl-[protein] + ADP + H(+). This chain is LEAF RUST 10 DISEASE-RESISTANCE LOCUS RECEPTOR-LIKE PROTEIN KINASE-like 2.2, found in Arabidopsis thaliana (Mouse-ear cress).